Reading from the N-terminus, the 268-residue chain is Phosphate import ATP-binding protein PstB (268 aa).

Residues 22–263 enclose the ABC transporter domain; that stretch reads LAVRNLNFYY…PKQQQTQDYI (242 aa). Residue 54–61 coordinates ATP; the sequence is GPSGCGKS.

The protein belongs to the ABC transporter superfamily. Phosphate importer (TC 3.A.1.7) family. As to quaternary structure, the complex is composed of two ATP-binding proteins (PstB), two transmembrane proteins (PstC and PstA) and a solute-binding protein (PstS).

Its subcellular location is the cell inner membrane. It catalyses the reaction phosphate(out) + ATP + H2O = ADP + 2 phosphate(in) + H(+). Its function is as follows. Part of the ABC transporter complex PstSACB involved in phosphate import. Responsible for energy coupling to the transport system. The chain is Phosphate import ATP-binding protein PstB from Gluconobacter oxydans (strain 621H) (Gluconobacter suboxydans).